An 877-amino-acid polypeptide reads, in one-letter code: G-protein coupled receptor family C group 6 member A (877 aa).

Positions 1–24 are cleaved as a signal peptide; that stretch reads MAGLDLSLVLMLSVLAGVREVSLT. Residues 25 to 567 lie on the Extracellular side of the membrane; sequence QVNQQGVIAP…EYFEWNSGFA (543 aa). 8 N-linked (GlcNAc...) asparagine glycosylation sites follow: N53, N99, N135, N263, N310, N322, N338, and N358. D388 serves as a coordination point for L-lysine. N-linked (GlcNAc...) asparagine glycosylation is found at N430, N475, N484, N528, and N548. The helical transmembrane segment at 568 to 588 threads the bilayer; the sequence is IALLTLAALGILLLISMSALF. The Cytoplasmic segment spans residues 589–603; sequence FWQRNSLVVKAAGGP. Residues 604 to 624 form a helical membrane-spanning segment; the sequence is LCHLILFSLLGSFISVIFFVG. Over 625-635 the chain is Extracellular; the sequence is EPSNESCRVRQ. N628 carries an N-linked (GlcNAc...) asparagine glycan. Residues 636 to 656 traverse the membrane as a helical segment; that stretch reads VIFGLSFTLCVSCILVKSLKI. Residues 657-676 are Cytoplasmic-facing; the sequence is LLAFQMNLELKELLRKLYKP. Residues 677-697 traverse the membrane as a helical segment; sequence YVIVCMCMGLQVTICTLWLTL. The Extracellular portion of the chain corresponds to 698 to 720; sequence HRPFIEKVVQPKSILLECNEGSD. The chain crosses the membrane as a helical span at residues 721-741; the sequence is LMFGLMLGYIVLLALICFTFA. The Cytoplasmic segment spans residues 742 to 755; the sequence is YKGRKLPQKYNEAK. Residues 756–776 form a helical membrane-spanning segment; sequence FITFGMLIYLMAWVIFIPVHV. Topologically, residues 777–782 are extracellular; it reads TTSGKY. Residues 783–803 form a helical membrane-spanning segment; that stretch reads VPAVEVVVILISNYGILSCHF. The Cytoplasmic portion of the chain corresponds to 804–877; that stretch reads LPKCYIIIFK…VSVPEIDNVL (74 aa).

Belongs to the G-protein coupled receptor 3 family. Homodimer; disulfide-linked. As to expression, expressed in olfactory epithelium. Also expressed in gills, tongue, lips and palatal organ. Not expressed in brain, kidney, liver, muscle, intestine, ovary and skin. In olfactory epithelium, it is widely expressed over the apical and medial portions of the olfactory sensory neurons, regions that contain olfactory neurons. Expressed in external epithelia, which contains taste buds and solitary chemosensory cells. On gill rakers, it is widely expressed in the surface epithelium, but excluded from taste buds.

It localises to the cell membrane. Its function is as follows. Olfactory receptor that is activated by amino acids that act as potent odorants in fish. Most highly activated by basic amino acids such as L-lysine and L-arginine. The chain is G-protein coupled receptor family C group 6 member A (gprc6a) from Carassius auratus (Goldfish).